The following is a 528-amino-acid chain: Bifunctional pantoate ligase/cytidylate kinase (528 aa).

Residues 1–293 (MRLFTTIAGL…IGSCRLIDNI (293 aa)) are pantoate--beta-alanine ligase. 34 to 41 (MGALHKGH) lines the ATP pocket. Histidine 41 functions as the Proton donor in the catalytic mechanism. Glutamine 65 lines the (R)-pantoate pocket. Position 65 (glutamine 65) interacts with beta-alanine. 160 to 163 (GQKD) is an ATP binding site. Glutamine 166 contacts (R)-pantoate. ATP is bound by residues isoleucine 189 and 197–200 (ISSR). The segment at 294-528 (LLRNRKPIIA…YGKSSVNNII (235 aa)) is cytidylate kinase.

The protein in the N-terminal section; belongs to the pantothenate synthetase family. This sequence in the C-terminal section; belongs to the cytidylate kinase family. Type 1 subfamily.

Its subcellular location is the cytoplasm. It catalyses the reaction (R)-pantoate + beta-alanine + ATP = (R)-pantothenate + AMP + diphosphate + H(+). The catalysed reaction is CMP + ATP = CDP + ADP. The enzyme catalyses dCMP + ATP = dCDP + ADP. The protein operates within cofactor biosynthesis; (R)-pantothenate biosynthesis; (R)-pantothenate from (R)-pantoate and beta-alanine: step 1/1. Functionally, catalyzes the condensation of pantoate with beta-alanine in an ATP-dependent reaction via a pantoyl-adenylate intermediate. Its function is as follows. Catalyzes the transfer of a phosphate group from ATP to either CMP or dCMP to form CDP or dCDP and ADP, respectively. The polypeptide is Bifunctional pantoate ligase/cytidylate kinase (Trichodesmium erythraeum (strain IMS101)).